The sequence spans 830 residues: Leucine--tRNA ligase (830 aa).

A 'HIGH' region motif is present at residues 34–44; the sequence is PYPSGNIHMGH. The short motif at 592–596 is the 'KMSKS' region element; sequence KMSKS. Lys-595 lines the ATP pocket.

It belongs to the class-I aminoacyl-tRNA synthetase family.

It localises to the cytoplasm. The catalysed reaction is tRNA(Leu) + L-leucine + ATP = L-leucyl-tRNA(Leu) + AMP + diphosphate. This is Leucine--tRNA ligase from Ehrlichia ruminantium (strain Gardel).